Here is a 2151-residue protein sequence, read N- to C-terminus: Polycystin-1-like protein 3 (2151 aa).

The N-terminal stretch at 1–20 (MLLQRRSWLWLYIRIGVILG) is a signal peptide. The Extracellular portion of the chain corresponds to 25–1073 (RKPSIREQHG…IKLLLHVTNN (1049 aa)). Residues 34 to 142 (GGNSCYQLNR…CIEKHHFICQ (109 aa)) enclose the C-type lectin domain. 2 disulfides stabilise this stretch: cysteine 55–cysteine 141 and cysteine 116–cysteine 133. N-linked (GlcNAc...) asparagine glycosylation occurs at asparagine 89. A compositionally biased stretch (polar residues) spans 222 to 245 (SLTGRPQVTSDTLASSSPPQGTSD). The tract at residues 222–609 (SLTGRPQVTS…SSSPPWPVIT (388 aa)) is disordered. Low complexity predominate over residues 246 to 348 (TPASSSPPQV…ASSSPPQGTS (103 aa)). Composition is skewed to polar residues over residues 349-363 (DTPA…TLDT) and 371-600 (QGTS…TPAS). N-linked (GlcNAc...) asparagine glycosylation is found at asparagine 566, asparagine 579, asparagine 592, asparagine 913, and asparagine 951. The GAIN-B domain maps to 899–1061 (TSLNTSTDHF…FIVPRTVDVE (163 aa)). 2 disulfides stabilise this stretch: cysteine 1011/cysteine 1039 and cysteine 1026/cysteine 1041. A GPS region spans residues 1011–1061 (CYFWDRYNRTWKSDGCQVGPKSTILKTQCLCDHLTFFSSDFFIVPRTVDVE). The stachel stretch occupies residues 1045-1061 (TFFSSDFFIVPRTVDVE). A helical transmembrane segment spans residues 1074–1094 (PVGVSLLSSLLGFYILLAMWA). The Cytoplasmic portion of the chain corresponds to 1095-1283 (SRKDREDMQK…NQFTRVQRLS (189 aa)). Residues 1119-1236 (SHYLIQVYTG…GNCERDRVFT (118 aa)) form the PLAT domain. Residues 1284 to 1304 (CCMALLLCDMVINIMFWKMGG) traverse the membrane as a helical segment. Residues 1305-1320 (TTAKRGTEQLGPLAVT) lie on the Extracellular side of the membrane. The helical transmembrane segment at 1321-1341 (LSELLVSIQTSIILFPIHLIF) threads the bilayer. The Cytoplasmic segment spans residues 1342 to 1533 (GRLFQLIHPP…FCLFRWLKCS (192 aa)). A helical transmembrane segment spans residues 1534 to 1554 (CWLLLGVISLASAFFITLYSL). Topologically, residues 1555 to 1575 (ELDKDQATSWVISMMLSVLQD) are extracellular. The helical transmembrane segment at 1576-1596 (IFISQPIKVIFLTLLFSLMAN) threads the bilayer. Topologically, residues 1597-1665 (HMPWLNKDKE…KLTGGTLVQI (69 aa)) are cytoplasmic. A helical membrane pass occupies residues 1666 to 1676 (LFLTLLMTTVY). Topologically, residues 1677-1892 (SAKDSSRFFL…SLTSLQSSER (216 aa)) are extracellular. Asparagine 1712 and asparagine 1822 each carry an N-linked (GlcNAc) asparagine glycan. Residues 1893 to 1921 (GFAWIVSQVVYYLLVCYYAFIQGCRLKRQ) traverse the membrane as a helical segment. Topologically, residues 1922-1930 (RLAFFTRKR) are cytoplasmic. Residues 1931–1949 (NLLDTSIVLISFSILGLSM) form a helical membrane-spanning segment. Residues 1950-1980 (QSLSLLHKKMQQYHCDRDRFISFYEALRVNS) lie on the Extracellular side of the membrane. The chain crosses the membrane as a helical span at residues 1981 to 2002 (AVTHLRGFLLLFATVRVWDLLR). Over 2003–2019 (HHAQLQVINKTLSKAWD) the chain is Cytoplasmic. Residues 2020–2044 (EVLGFILIIVVLLSSYAMTFNLLFG) form a helical membrane-spanning segment. Positions 2043-2081 (FGWSISDYQSFFRSIVTVVGLLMGTSKHKEVIALYPILG) are channel pore-region. Topologically, residues 2045 to 2077 (WSISDYQSFFRSIVTVVGLLMGTSKHKEVIALY) are extracellular. Residues 2078 to 2097 (PILGSLLVLSSIILMGLVII) traverse the membrane as a helical segment. At 2098–2151 (NLFVSAILIAFGKERKACEKEATLTDMLLQKLSSLLGIRLHQNPSEEHADNTGY) the chain is on the cytoplasmic side.

Belongs to the polycystin family. As to quaternary structure, heterotetramer with PKD2L1, composed of 3 subunit of PKD2L1 and 1 subunit of PKD1L3. Post-translationally, autoproteolytically processed at the GPS region of the GAIN-B domain; this cleavage modulates receptor activity. As to expression, expressed in a subset of taste receptor cells (type III taste cells) distinct from those involved in bitter, sweet and umami taste. Expressed in circumvallate and foliate taste buds, but not in surrounding non-gustatory lingual epithelium cells. Expressed in testis.

It is found in the cell membrane. The catalysed reaction is Ca(2+)(in) = Ca(2+)(out). The enzyme catalyses Na(+)(in) = Na(+)(out). It catalyses the reaction K(+)(in) = K(+)(out). It carries out the reaction Mg(2+)(in) = Mg(2+)(out). The non-selective cation channel is gated following an off-response property by acid: gated open after the removal of acid stimulus, but not during acid application. Non-selective cation channel activity is inhibited by capsaicin. Regulation of non-selective cation channel activity by external Ca(2+) is bimodal, first sensitizing and subsequently inactivating the current. The apo (closed) heterotetramer has an asymmetric selectivity filter (SF) guarded by Lys-2069 in absence of Ca(2+). However, Ca(2+)-entrance to the SF vestibule is accompanied by a swing motion of Lys-2069 on PKD1L3. Functionally, pore-forming subunit of a heterotetrameric, non-selective cation channel that is permeable to Ca(2+). Also shows permeability towards NA(1+), K(+) and Mg(2+). Heterotetrameric complex channel is activated by external low pH and Ca(2+), but opens only when the extracellular pH rises again and after the removal of acid stimulus. May act as a sour taste receptor in gustatory cells; however, its contribution to sour taste perception is unclear in vivo and may be indirect. This chain is Polycystin-1-like protein 3, found in Mus musculus (Mouse).